The following is a 932-amino-acid chain: Isoleucine--tRNA ligase (932 aa).

Positions 57–67 match the 'HIGH' region motif; sequence PYANGDIHMGH. Residue Glu556 participates in L-isoleucyl-5'-AMP binding. A 'KMSKS' region motif is present at residues 597 to 601; it reads KMSKS. Lys600 is an ATP binding site. The Zn(2+) site is built by Cys891, Cys894, Cys911, and Cys914.

This sequence belongs to the class-I aminoacyl-tRNA synthetase family. IleS type 1 subfamily. In terms of assembly, monomer. The cofactor is Zn(2+).

It localises to the cytoplasm. The catalysed reaction is tRNA(Ile) + L-isoleucine + ATP = L-isoleucyl-tRNA(Ile) + AMP + diphosphate. Its function is as follows. Catalyzes the attachment of isoleucine to tRNA(Ile). As IleRS can inadvertently accommodate and process structurally similar amino acids such as valine, to avoid such errors it has two additional distinct tRNA(Ile)-dependent editing activities. One activity is designated as 'pretransfer' editing and involves the hydrolysis of activated Val-AMP. The other activity is designated 'posttransfer' editing and involves deacylation of mischarged Val-tRNA(Ile). The protein is Isoleucine--tRNA ligase of Lactiplantibacillus plantarum (strain ATCC BAA-793 / NCIMB 8826 / WCFS1) (Lactobacillus plantarum).